Consider the following 267-residue polypeptide: MNTREKYLSNVNRLVIKVGSSTLTHPSGLLNFYKIEHIVRQIADLHNQGIKVILVSSGAIGAGIGKLRLKERPKTIPEKQAAAAVGQGVLMHTYEKLFAEYGQIVGQILITREDLSSKKRVVNVQNTFSALLDHGIIPIVNENDATVVEEIKFGDNDTLSARVASLIKADLLILLSDIDGLYDSNPAVNKNAVLIDTVNEVNEEVKASAGGAGSKLGTGGMATKIRAAEIATENGISMVIANGEKQEAIRNILNFENEGTLFIPKNK.

K17 contributes to the ATP binding site. Substrate is bound by residues S57, D144, and N156. Residues 176–177 (SD) and 218–224 (TGGMATK) each bind ATP.

This sequence belongs to the glutamate 5-kinase family.

Its subcellular location is the cytoplasm. The enzyme catalyses L-glutamate + ATP = L-glutamyl 5-phosphate + ADP. Its pathway is amino-acid biosynthesis; L-proline biosynthesis; L-glutamate 5-semialdehyde from L-glutamate: step 1/2. In terms of biological role, catalyzes the transfer of a phosphate group to glutamate to form L-glutamate 5-phosphate. In Clostridium acetobutylicum (strain ATCC 824 / DSM 792 / JCM 1419 / IAM 19013 / LMG 5710 / NBRC 13948 / NRRL B-527 / VKM B-1787 / 2291 / W), this protein is Glutamate 5-kinase.